The primary structure comprises 415 residues: Amino acid decarboxylase lolD2 (415 aa).

K62 bears the N6-(pyridoxal phosphate)lysine mark. Residues S194, G231, and 266–269 each bind pyridoxal 5'-phosphate; that span reads EPGT. 315–316 contacts substrate; the sequence is IV. C351 functions as the Proton donor; shared with dimeric partner in the catalytic mechanism. C351 is modified (S-nitrosocysteine). D352 lines the substrate pocket. A pyridoxal 5'-phosphate-binding site is contributed by Y381.

Belongs to the Orn/Lys/Arg decarboxylase class-II family. Homodimer. It depends on pyridoxal 5'-phosphate as a cofactor.

It participates in alkaloid biosynthesis. Its function is as follows. Amino acid decarboxylase; part of the gene cluster that mediates the biosynthesis of loline alkaloids, potent insecticidal agents composed of a pyrrolizidine ring system and an uncommon ether bridge linking carbons 2 and 7. Lolines are structurally differentiated by the various modifications of the L-amino group and include norloline, loline, N-methylloline, N-acetylloline, N-acetylnorloline, and N-formylloline. The first committed step is the condensation of O-acetyl-L-homoserine (derived from L-aspartic acid) and L-proline, probably catalyzed by the gamma-type pyridoxal 5'-phosphate(PLP)-dependent enzyme lolC, to give the diamino diacid, NACPP. Ensuing cyclization, decarboxylation, and acetylation steps yield 1-exo-acetamidopyrrolizidine (AcAP). LolO is required for installation of the ether bridge upon the pathway intermediate, 1-exo-acetamidopyrrolizidine (AcAP). In sequential 2-oxoglutarate- and O(2)-consuming steps, lolO removes hydrogens from C2 and C7 of AcAP to form both carbon-oxygen bonds in N-acetylnorloline (NANL), the precursor to all other lolines. The enzymes lolD, lolE, lolF and lolT have also been proposed to be involved in the ether-bridge installation. Further processing of the exocyclic moiety of NANL by fungal N-acetamidase (LolN), methyltransferase (LolM), and cytochrome P450 (LolP) enzymes, with occasional involvement of a plant acetyltransferase, generates the other known lolines. LolN transforms NANL to norlonine which is monomethylated and dimethylated to respectively lonine and N-methyllonine (NML) by lolM. LolP catalyzes hydroxylation of the methyl group in N-methylloline (NML) and further oxygenation to N-formylloline (NFL). A plant acetyltransferase is responsible for the acetylation of loline to form N-acetylloline (NAL). LolA might interact with aspartate kinase to prevent feedback inhibition of its activity by these end products and thereby promote production of L-homoserine from L-aspartate. The sequence is that of Amino acid decarboxylase lolD2 from Epichloe uncinata (Endophyte fungus).